The chain runs to 428 residues: MSKTIIEFKNVSKTYADTDTTVLKDISFELEEGKFYTLLGASGSGKSTILNIIAGLLDATDGDVILDNKRINDLPANKRNVHTIFQSYALFPNMNVFDNVAFALKIKGVDKKEIAKRVSESLKLVRLDGFEKRSITKLSGGQKQRVAIARAIIDRPKVLLLDESLSALDMKLRKDMQYELRELQQSLGITFIFVTHDQEEALAMSDWVFIMNEGEIVQSGTPTDIYDEPINHFVADFIGESNILNGRMIEDYLVEFNGQKFEAVDGGMRKNEPIEVVIRPEDIWFTLPDEGKFNVKVDTQLFRGVHYEIVAYDEFNNEWLIHSTHKAIVGETVGLDFDPEAIHIMRLNETEEEFDARIEEYVEEEETVGLANAVEEENAEEEAAIQEAVKEALENTMELTELAETVNEILQKQENEPESENKESGANK.

The 233-residue stretch at 6-238 (IEFKNVSKTY…PINHFVADFI (233 aa)) folds into the ABC transporter domain. Position 40–47 (40–47 (GASGSGKS)) interacts with ATP.

This sequence belongs to the ABC transporter superfamily. Spermidine/putrescine importer (TC 3.A.1.11.1) family. As to quaternary structure, the complex is composed of two ATP-binding proteins (PotA), two transmembrane proteins (PotB and PotC) and a solute-binding protein (PotD).

It localises to the cell membrane. It carries out the reaction ATP + H2O + polyamine-[polyamine-binding protein]Side 1 = ADP + phosphate + polyamineSide 2 + [polyamine-binding protein]Side 1.. Its function is as follows. Part of the ABC transporter complex PotABCD involved in spermidine/putrescine import. Responsible for energy coupling to the transport system. The chain is Spermidine/putrescine import ATP-binding protein PotA from Lactococcus lactis subsp. lactis (strain IL1403) (Streptococcus lactis).